Reading from the N-terminus, the 146-residue chain is Prepilin peptidase-dependent protein D (146 aa).

Residues 1-6 (MDKQRG) constitute a propeptide, leader sequence. Residue Phe-7 is modified to N-methylphenylalanine. Residues 7–27 (FTLIELMVVIGIIAILSAIGI) form a helical membrane-spanning segment.

It belongs to the N-Me-Phe pilin family.

Its subcellular location is the fimbrium. The protein localises to the membrane. Functionally, major component of the type IV pilus (T4P) that plays a role in cell adhesion and motility. Not produced when grown under standard laboratory conditions. The protein is Prepilin peptidase-dependent protein D (ppdD) of Escherichia coli (strain K12).